Consider the following 131-residue polypeptide: Glycine cleavage system H protein (131 aa).

The Lipoyl-binding domain maps to 24–106; that stretch reads RVTVGISDHA…YGDGWMYVVE (83 aa). N6-lipoyllysine is present on lysine 65.

It belongs to the GcvH family. In terms of assembly, the glycine cleavage system is composed of four proteins: P, T, L and H. (R)-lipoate is required as a cofactor.

Its function is as follows. The glycine cleavage system catalyzes the degradation of glycine. The H protein shuttles the methylamine group of glycine from the P protein to the T protein. This chain is Glycine cleavage system H protein, found in Stenotrophomonas maltophilia (strain R551-3).